We begin with the raw amino-acid sequence, 180 residues long: Ribosome maturation factor RimM (180 aa).

The PRC barrel domain occupies 104–177 (PEEFHDHQLV…RVVVDPPGGL (74 aa)).

This sequence belongs to the RimM family. In terms of assembly, binds ribosomal protein uS19.

The protein localises to the cytoplasm. Functionally, an accessory protein needed during the final step in the assembly of 30S ribosomal subunit, possibly for assembly of the head region. Essential for efficient processing of 16S rRNA. May be needed both before and after RbfA during the maturation of 16S rRNA. It has affinity for free ribosomal 30S subunits but not for 70S ribosomes. In Salinispora arenicola (strain CNS-205), this protein is Ribosome maturation factor RimM.